The primary structure comprises 407 residues: Transmembrane protein 184B (407 aa).

Residues 1–25 (MTVRGDVLAPDPASPTTAAASPSVS) are disordered. Residues 9–25 (APDPASPTTAAASPSVS) show a composition bias toward low complexity. A run of 7 helical transmembrane segments spans residues 40 to 60 (FLMT…ALLI), 84 to 104 (ILFI…FFTN), 121 to 141 (LVIY…SSIM), 178 to 198 (LQFC…QAFG), 214 to 234 (VTII…LFYF), 249 to 269 (FFMV…LAIL), and 290 to 310 (VAAG…ALAL). The tract at residues 369-395 (TLEPGPTWRGGAHGLSRSHSLSGARDN) is disordered. 3 positions are modified to phosphoserine: serine 388, serine 402, and serine 403.

It belongs to the TMEM184 family.

Its subcellular location is the membrane. May activate the MAP kinase signaling pathway. The protein is Transmembrane protein 184B (TMEM184B) of Homo sapiens (Human).